Here is a 502-residue protein sequence, read N- to C-terminus: Glycerol kinase (502 aa).

Threonine 12 contributes to the ADP binding site. Residues threonine 12, threonine 13, and serine 14 each coordinate ATP. Position 12 (threonine 12) interacts with sn-glycerol 3-phosphate. Residue arginine 16 participates in ADP binding. Sn-glycerol 3-phosphate-binding residues include arginine 82, glutamate 83, tyrosine 134, and aspartate 243. Arginine 82, glutamate 83, tyrosine 134, aspartate 243, and glutamine 244 together coordinate glycerol. ADP contacts are provided by threonine 265 and glycine 308. Residues threonine 265, glycine 308, glutamine 312, and glycine 412 each contribute to the ATP site. Residue glycine 412 coordinates ADP.

The protein belongs to the FGGY kinase family.

It carries out the reaction glycerol + ATP = sn-glycerol 3-phosphate + ADP + H(+). It functions in the pathway polyol metabolism; glycerol degradation via glycerol kinase pathway; sn-glycerol 3-phosphate from glycerol: step 1/1. With respect to regulation, inhibited by fructose 1,6-bisphosphate (FBP). Key enzyme in the regulation of glycerol uptake and metabolism. Catalyzes the phosphorylation of glycerol to yield sn-glycerol 3-phosphate. This is Glycerol kinase from Methylobacterium nodulans (strain LMG 21967 / CNCM I-2342 / ORS 2060).